The chain runs to 126 residues: MRHYEVVFIVHPDQSEQVPAMVERYQALVTGQSGTVHRLEDWGRRQLAYPIQKLVKAHYVCMNIECGQATLDELEHSFRYNDAVLRHLVIKTKKAPAAPSIMMKSVEREEARKASAEAAATATAAE.

Belongs to the bacterial ribosomal protein bS6 family.

In terms of biological role, binds together with bS18 to 16S ribosomal RNA. This chain is Small ribosomal subunit protein bS6, found in Bordetella bronchiseptica (strain ATCC BAA-588 / NCTC 13252 / RB50) (Alcaligenes bronchisepticus).